Reading from the N-terminus, the 1755-residue chain is Transposon Ty1-DR5 Gag-Pol polyprotein (1755 aa).

Composition is skewed to polar residues over residues 1–10 (MESQQLSNYP), 48–60 (TKANSQQTTTPAS), and 127–152 (QSQFPQYPSSVGTPLSTPSPESGNTF). Disordered regions lie at residues 1 to 93 (MESQ…MMTQ), 126 to 173 (PQSQ…RPPP), and 352 to 421 (GSRN…SKST). The span at 153-165 (TDSSSADSDMTST) shows a compositional bias: low complexity. The tract at residues 299–401 (NNGIHINNKV…NSKSKTARAH (103 aa)) is RNA-binding. Residues 402–418 (NVSTSNNSPSTDNDSIS) show a composition bias toward low complexity. D461 (for protease activity; shared with dimeric partner) is an active-site residue. The segment at 583–640 (NVHTSESTRKYPYPFIHRMLAHANAQTIRYSLKNNTITYFNESDVDWSSAIDYQCPDC) is integrase-type zinc finger-like. An Integrase catalytic domain is found at 660-835 (NSYEPFQYLH…AGLDISTLLP (176 aa)). 2 residues coordinate Mg(2+): D671 and D736. Disordered stretches follow at residues 956-1087 (SKAV…ETEK), 1092-1111 (RSPSIDASPPENNSSHNIVP), and 1130-1187 (DLPL…DNET). Low complexity predominate over residues 960 to 969 (SPTDSTPPST). The span at 1005-1015 (STPQISNIEST) shows a compositional bias: polar residues. The segment covering 1038–1053 (ESSHASKSKDFRHSDS) has biased composition (basic and acidic residues). Polar residues-rich tracts occupy residues 1054–1082 (YSENETNHTNVPISSTGGTNNKTVPQISD) and 1101–1111 (PENNSSHNIVP). Residues 1178-1212 (KKRSLEDNETEIKVSRDTWNTKNMRSLEPPRSKKR) carry the Bipartite nuclear localization signal motif. The region spanning 1338–1476 (NNYYITQLDI…DILGLEIKYQ (139 aa)) is the Reverse transcriptase Ty1/copia-type domain. The Mg(2+) site is built by D1346, D1427, D1428, D1610, E1652, and D1685. Positions 1610–1752 (DASYGNQPYY…IKTFKLLTNK (143 aa)) constitute an RNase H Ty1/copia-type domain.

The capsid protein forms a homotrimer, from which the VLPs are assembled. The protease is a homodimer, whose active site consists of two apposed aspartic acid residues. Initially, virus-like particles (VLPs) are composed of the structural unprocessed proteins Gag and Gag-Pol, and also contain the host initiator methionine tRNA (tRNA(i)-Met) which serves as a primer for minus-strand DNA synthesis, and a dimer of genomic Ty RNA. Processing of the polyproteins occurs within the particle and proceeds by an ordered pathway, called maturation. First, the protease (PR) is released by autocatalytic cleavage of the Gag-Pol polyprotein yielding capsid protein p45 and a Pol-p154 precursor protein. This cleavage is a prerequisite for subsequent processing of Pol-p154 at the remaining sites to release the mature structural and catalytic proteins. Maturation takes place prior to the RT reaction and is required to produce transposition-competent VLPs.

The protein localises to the cytoplasm. Its subcellular location is the nucleus. It carries out the reaction DNA(n) + a 2'-deoxyribonucleoside 5'-triphosphate = DNA(n+1) + diphosphate. The enzyme catalyses Endonucleolytic cleavage to 5'-phosphomonoester.. In terms of biological role, capsid protein (CA) is the structural component of the virus-like particle (VLP), forming the shell that encapsulates the retrotransposons dimeric RNA genome. The particles are assembled from trimer-clustered units and there are holes in the capsid shells that allow for the diffusion of macromolecules. CA also has nucleocapsid-like chaperone activity, promoting primer tRNA(i)-Met annealing to the multipartite primer-binding site (PBS), dimerization of Ty1 RNA and initiation of reverse transcription. Its function is as follows. The aspartyl protease (PR) mediates the proteolytic cleavages of the Gag and Gag-Pol polyproteins after assembly of the VLP. Functionally, reverse transcriptase/ribonuclease H (RT) is a multifunctional enzyme that catalyzes the conversion of the retro-elements RNA genome into dsDNA within the VLP. The enzyme displays a DNA polymerase activity that can copy either DNA or RNA templates, and a ribonuclease H (RNase H) activity that cleaves the RNA strand of RNA-DNA heteroduplexes during plus-strand synthesis and hydrolyzes RNA primers. The conversion leads to a linear dsDNA copy of the retrotransposon that includes long terminal repeats (LTRs) at both ends. Integrase (IN) targets the VLP to the nucleus, where a subparticle preintegration complex (PIC) containing at least integrase and the newly synthesized dsDNA copy of the retrotransposon must transit the nuclear membrane. Once in the nucleus, integrase performs the integration of the dsDNA into the host genome. The polypeptide is Transposon Ty1-DR5 Gag-Pol polyprotein (TY1B-DR5) (Saccharomyces cerevisiae (strain ATCC 204508 / S288c) (Baker's yeast)).